Here is a 407-residue protein sequence, read N- to C-terminus: Aurora kinase (407 aa).

2 disordered regions span residues 1–43 (MTPT…STSS) and 66–137 (ERQG…TQSK). Low complexity-rich tracts occupy residues 31-43 (SASTTSTTASTSS) and 126-136 (STTTTMTSTQS). The Protein kinase domain occupies 147 to 399 (FDIGRPLGKG…LEGVIAHAWI (253 aa)). ATP-binding positions include Lys157, Lys176, and 224-227 (LEYA). The active-site Proton acceptor is Asp272. Residue Asp290 coordinates ATP.

This sequence belongs to the protein kinase superfamily. Ser/Thr protein kinase family.

It localises to the cytoplasm. Its subcellular location is the cytoskeleton. The protein localises to the spindle. It is found in the midbody. The protein resides in the microtubule organizing center. It localises to the centrosome. Its subcellular location is the nucleus. The protein localises to the chromosome. It is found in the centromere. The enzyme catalyses L-seryl-[protein] + ATP = O-phospho-L-seryl-[protein] + ADP + H(+). It carries out the reaction L-threonyl-[protein] + ATP = O-phospho-L-threonyl-[protein] + ADP + H(+). Its activity is regulated as follows. Cdc2 activity is required for activation. Functionally, serine/threonine protein kinase that contributes to the regulation of cell cycle progression. Involved in meiotic apparatus formation and polar body extrusion. Contributes to Plk1 activation and phosphorylation of histone H3 at 'Ser-10' during meiosis I. Required for accurate progression of early embryonic M phase. Involved in chromosome alignment and cleavage furrow formation during early embryonic cycles. May be involved in mitotic spindle formation and cytokinesis. The polypeptide is Aurora kinase (Patiria pectinifera (Starfish)).